The sequence spans 243 residues: Ribonuclease 3 (243 aa).

Residues 10 to 146 (VNRFRKRFDT…FIGALYLDQG (137 aa)) form the RNase III domain. Residue Glu59 participates in Mg(2+) binding. Residue Asp63 is part of the active site. Mg(2+) is bound by residues Asp132 and Glu135. Glu135 is an active-site residue. In terms of domain architecture, DRBM spans 172-241 (DFKTQFQEYV…AESAYKQLKQ (70 aa)). A compositionally biased stretch (basic and acidic residues) spans 219-231 (GKGKTKKESEQRA). The segment at 219-243 (GKGKTKKESEQRAAESAYKQLKQIK) is disordered.

The protein belongs to the ribonuclease III family. As to quaternary structure, homodimer. The cofactor is Mg(2+).

It is found in the cytoplasm. It catalyses the reaction Endonucleolytic cleavage to 5'-phosphomonoester.. Digests double-stranded RNA. Involved in the processing of primary rRNA transcript to yield the immediate precursors to the large and small rRNAs (23S and 16S). Processes some mRNAs, and tRNAs when they are encoded in the rRNA operon. Processes pre-crRNA and tracrRNA of type II CRISPR loci if present in the organism. The polypeptide is Ribonuclease 3 (Staphylococcus aureus (strain USA300)).